Here is a 578-residue protein sequence, read N- to C-terminus: uncharacterized protein (578 aa).

This is an uncharacterized protein from Eikenella corrodens.